The following is a 381-amino-acid chain: Cytochrome b (381 aa).

A run of 4 helical transmembrane segments spans residues 38–58 (FGSL…FLAM), 82–103 (WLLR…YFHI), 118–138 (WMTG…GYVL), and 183–203 (FFTF…IHLL). Positions 88 and 102 each coordinate heme b. Heme b contacts are provided by His187 and His201. An a ubiquinone-binding site is contributed by His206. Helical transmembrane passes span 231–251 (IKDT…SLTS), 293–313 (LGGV…PFTF), 325–345 (VAQP…WIGA), and 352–372 (YNFL…FTPI).

It belongs to the cytochrome b family. The main subunits of complex b-c1 are: cytochrome b, cytochrome c1 and the Rieske protein. Requires heme b as cofactor.

The protein localises to the mitochondrion inner membrane. Functionally, component of the ubiquinol-cytochrome c reductase complex (complex III or cytochrome b-c1 complex) that is part of the mitochondrial respiratory chain. The b-c1 complex mediates electron transfer from ubiquinol to cytochrome c. Contributes to the generation of a proton gradient across the mitochondrial membrane that is then used for ATP synthesis. The sequence is that of Cytochrome b (MT-CYB) from Artemia franciscana (Brine shrimp).